We begin with the raw amino-acid sequence, 163 residues long: Ribonuclease P protein subunit p25-like protein (163 aa).

Disordered stretches follow at residues 1–24 and 126–163; these read MEQY…LPPD and LDPS…DTRS. Over residues 153 to 163 the composition is skewed to basic residues; the sequence is RPRRRARDTRS.

Belongs to the histone-like Alba family.

It is found in the nucleus. Its function is as follows. May be a component of ribonuclease P or MRP. In Mus musculus (Mouse), this protein is Ribonuclease P protein subunit p25-like protein (Rpp25l).